Here is a 368-residue protein sequence, read N- to C-terminus: p21-activated protein kinase-interacting protein 1-like (368 aa).

WD repeat units follow at residues 45 to 82 (AHTA…EHGA), 85 to 123 (HHDG…CLKT), 126 to 165 (AHKG…SAFI), 207 to 245 (AFTK…CVCE), and 248 to 289 (AHEN…IESP).

The protein resides in the nucleus. It is found in the nucleolus. In terms of biological role, negatively regulates the PAK1 kinase. PAK1 is a member of the PAK kinase family, which has been shown to play a positive role in the regulation of signaling pathways involving MAPK8 and RELA. PAK1 exists as an inactive homodimer, which is activated by binding of small GTPases such as CDC42 to an N-terminal regulatory domain. PAK1IP1 also binds to the N-terminus of PAK1, and inhibits the specific activation of PAK1 by CDC42. May be involved in ribosomal large subunit assembly. The protein is p21-activated protein kinase-interacting protein 1-like (pak1ip1) of Danio rerio (Zebrafish).